We begin with the raw amino-acid sequence, 375 residues long: Succinyl-diaminopimelate desuccinylase (375 aa).

A Zn(2+)-binding site is contributed by His66. Asp68 is a catalytic residue. Asp99 serves as a coordination point for Zn(2+). Glu133 functions as the Proton acceptor in the catalytic mechanism. Residues Glu134, Glu162, and His348 each contribute to the Zn(2+) site.

The protein belongs to the peptidase M20A family. DapE subfamily. As to quaternary structure, homodimer. The cofactor is Zn(2+). It depends on Co(2+) as a cofactor.

The enzyme catalyses N-succinyl-(2S,6S)-2,6-diaminopimelate + H2O = (2S,6S)-2,6-diaminopimelate + succinate. Its pathway is amino-acid biosynthesis; L-lysine biosynthesis via DAP pathway; LL-2,6-diaminopimelate from (S)-tetrahydrodipicolinate (succinylase route): step 3/3. Functionally, catalyzes the hydrolysis of N-succinyl-L,L-diaminopimelic acid (SDAP), forming succinate and LL-2,6-diaminopimelate (DAP), an intermediate involved in the bacterial biosynthesis of lysine and meso-diaminopimelic acid, an essential component of bacterial cell walls. The sequence is that of Succinyl-diaminopimelate desuccinylase from Klebsiella pneumoniae subsp. pneumoniae (strain ATCC 700721 / MGH 78578).